Here is a 771-residue protein sequence, read N- to C-terminus: Solute carrier family 7 member 14 (771 aa).

The next 6 membrane-spanning stretches (helical) occupy residues 58–78 (LISL…SGLV), 83–103 (AGPG…LSGV), 130–150 (FVAF…TAAG), 187–207 (YPDL…ALGV), 216–236 (VLNV…FFFI), and 251–271 (WSGV…FDII). N-linked (GlcNAc...) asparagine glycosylation occurs at asparagine 282. The next 5 helical transmembrane spans lie at 291–311 (ASLV…TLMV), 336–356 (FVVA…SLFP), 360–380 (VIYA…VSSY), 384–404 (PVVA…LVSL), and 407–427 (LIEM…VCVL). Serine 465, serine 468, and serine 488 each carry phosphoserine. 4 consecutive transmembrane segments (helical) span residues 565-585 (VTIC…FIIF), 596-616 (WAIL…FVIL), 628-648 (MAPC…YLML), and 655-675 (WIRF…YGIW). Asparagine 676 carries N-linked (GlcNAc...) asparagine glycosylation. Residues 712-771 (TEGESQENWGGPAEDKGFYYQQMSDTQPNTRTSSKAKSKSKHKQNSEALIANDELDYSPE) are disordered. Residues 732–743 (QQMSDTQPNTRT) show a composition bias toward polar residues. The segment covering 745–754 (SKAKSKSKHK) has biased composition (basic residues). Phosphoserine occurs at positions 757 and 769.

This sequence belongs to the amino acid-polyamine-organocation (APC) superfamily. Cationic amino acid transporter (CAT) (TC 2.A.3.3) family.

Its subcellular location is the lysosome membrane. It catalyses the reaction 4-aminobutanoate(in) = 4-aminobutanoate(out). Functionally, imports 4-aminobutanoate (GABA) into lysosomes. May act as a GABA sensor that regulates mTORC2-dependent INS signaling and gluconeogenesis. The transport mechanism and substrate selectivity remain to be elucidated. The polypeptide is Solute carrier family 7 member 14 (Bos taurus (Bovine)).